A 204-amino-acid chain; its full sequence is MNALIDNRVLALAGVVQALQQVRQIAETGQSETSAVRTAIDSVLRIDAESPEAVYGGIRNLTQGLQLLHDYFGNQLRDQLLPRLTLAVLQLERRFIRDTSIVAAVSTGITQAAHQVEQTGDSAHPEILSTLGALYANTISHLRPRIIVQGNPHYLGQAGVVAEIRAMLLAALRSAVLWRQLNGNLLDFLLTKRAMAAATERALR.

Belongs to the HflD family.

It is found in the cytoplasm. The protein localises to the cell inner membrane. The protein is High frequency lysogenization protein HflD homolog of Xylella fastidiosa (strain M23).